The sequence spans 449 residues: Doublesex- and mab-3-related transcription factor A2 (449 aa).

The DM DNA-binding region spans 57-104 (CARCRNHGVVSALKGHKRYCRWKDCMCAKCTLIAERQRVMAAQVALRR). The disordered stretch occupies residues 166–259 (KNQLSGSATP…PSPSSAASRH (94 aa)). The span at 167–177 (NQLSGSATPQP) shows a compositional bias: polar residues. Residues 230-240 (GSVSSIGSDSG) show a composition bias toward low complexity. Residues 260–295 (MNAIDILTRVFPSHKRSVLELVLQGCGKDVVQAIEQ) form the DMA domain.

Belongs to the DMRT family.

It localises to the nucleus. In terms of biological role, may be involved in sexual development. This Oreochromis niloticus (Nile tilapia) protein is Doublesex- and mab-3-related transcription factor A2 (dmrta2).